Consider the following 363-residue polypeptide: Ribosomal RNA large subunit methyltransferase M (363 aa).

S-adenosyl-L-methionine is bound by residues Ser190, 223–226, Asp242, Asp262, and Asp279; that span reads CPGG. Lys308 functions as the Proton acceptor in the catalytic mechanism.

Belongs to the class I-like SAM-binding methyltransferase superfamily. RNA methyltransferase RlmE family. RlmM subfamily. Monomer.

The protein localises to the cytoplasm. The enzyme catalyses cytidine(2498) in 23S rRNA + S-adenosyl-L-methionine = 2'-O-methylcytidine(2498) in 23S rRNA + S-adenosyl-L-homocysteine + H(+). In terms of biological role, catalyzes the 2'-O-methylation at nucleotide C2498 in 23S rRNA. In Aliivibrio salmonicida (strain LFI1238) (Vibrio salmonicida (strain LFI1238)), this protein is Ribosomal RNA large subunit methyltransferase M.